A 532-amino-acid chain; its full sequence is MSKAWGGIGIGAWADEAERADEEQAAEATAATADTQSFPSLREAAAATATSGKSRKMKKMSLSEFTTGAYTAPGGRNSVGLTQQEILQLPTGPRQRSEEEMQPGRLGGGFSSYGGRSGGRIGRDRDDSDGSWSGGGGGGGRRPYGGGFDDDRRGNQSRVSDFPQPSRADEVDDWGKEKKPLPSFDQGRQGRYSGDGGGFGGGGSGFGGGGGGGGGGLSRADDVDNWGAGKRQAPVRSSTFGSSFGDSGQEERRRLVLEPRKVESGGSETPPVVEKTSKPNPFGAARPREDVLAEKGLDWKKIDSEIEAKKGSSQTSRPTSAHSSRPSSAQSNRSESSGLNNVVKPRPKVNPFGDAKPREVLLEEQGKDWRKMDLELEHRRVDRPETEEEKMLKEEIEELRKKLEKESVAPEIKESDQEPGSNNNHNDLPEIIRGKEKDLEILTRELDDKVRFRQKPVERPGSGAGRTGTYSERTHSRAGSIDETRSFESTERPRSRGAVDAWVRPANEQRRNFQGTKERGFFSNRSSSREGW.

Disordered stretches follow at residues 16 to 365 (EAER…LEEQ), 401 to 434 (KKLE…IIRG), and 451 to 532 (RFRQ…REGW). Positions 26–35 (AEATAATADT) are enriched in low complexity. Composition is skewed to gly residues over residues 105–120 (RLGG…SGGR) and 132–147 (WSGG…YGGG). Residues 167 to 180 (RADEVDDWGKEKKP) show a composition bias toward basic and acidic residues. The short motif at 177-184 (EKKPLPSF) is the Nuclear localization signal 1 element. Residues 193-217 (SGDGGGFGGGGSGFGGGGGGGGGGL) are compositionally biased toward gly residues. A Nuclear localization signal 2 motif is present at residues 237-244 (SSTFGSSF). The span at 237–247 (SSTFGSSFGDS) shows a compositional bias: low complexity. Basic and acidic residues-rich tracts occupy residues 249 to 263 (QEER…RKVE) and 286 to 310 (RPRE…EAKK). Positions 315–337 (TSRPTSAHSSRPSSAQSNRSESS) are enriched in low complexity. Composition is skewed to basic and acidic residues over residues 355-365 (AKPREVLLEEQ), 401-416 (KKLE…KESD), 472-494 (ERTH…ERPR), and 507-520 (NEQR…KERG).

The protein belongs to the eIF-4 subunit B family. Homodimer. Nonspherical monomer. mRNA-discriminating component of initiation complexes. In terms of processing, phosphorylated.

It localises to the nucleus. Its function is as follows. Promotes the eIF4F and eIF4A RNA-dependent ATP-hydrolysis activity with different efficiency depending on mRNAs, thus providing mRNA discrimination during initiation of translation. The chain is Eukaryotic translation initiation factor 4B1 from Arabidopsis thaliana (Mouse-ear cress).